Here is a 90-residue protein sequence, read N- to C-terminus: DNA-directed RNA polymerase subunit omega (90 aa).

The tract at residues 69–90 (RQEQQEQEAAELAAVSSIARNR) is disordered.

Belongs to the RNA polymerase subunit omega family. The RNAP catalytic core consists of 2 alpha, 1 beta, 1 beta' and 1 omega subunit. When a sigma factor is associated with the core the holoenzyme is formed, which can initiate transcription.

The enzyme catalyses RNA(n) + a ribonucleoside 5'-triphosphate = RNA(n+1) + diphosphate. Its function is as follows. Promotes RNA polymerase assembly. Latches the N- and C-terminal regions of the beta' subunit thereby facilitating its interaction with the beta and alpha subunits. The sequence is that of DNA-directed RNA polymerase subunit omega from Vibrio vulnificus (strain CMCP6).